Consider the following 256-residue polypeptide: N-glycosylase/DNA lyase (256 aa).

Positions 31, 58, and 69 each coordinate 8-oxoguanine. The interval 125 to 184 (TLRQLSHIVGARREQKTLVFTIKILNYAYMCSRGVNRVLPFDIPIPVDYRVARLTWCAGL) is helix-hairpin-helix. Catalysis depends on K140, which acts as the Schiff-base intermediate with DNA. 2 residues coordinate 8-oxoguanine: F144 and P170. Residue D172 is part of the active site. 8-oxoguanine-binding residues include D218 and W222.

It belongs to the archaeal N-glycosylase/DNA lyase (AGOG) family.

The enzyme catalyses 2'-deoxyribonucleotide-(2'-deoxyribose 5'-phosphate)-2'-deoxyribonucleotide-DNA = a 3'-end 2'-deoxyribonucleotide-(2,3-dehydro-2,3-deoxyribose 5'-phosphate)-DNA + a 5'-end 5'-phospho-2'-deoxyribonucleoside-DNA + H(+). DNA repair enzyme that is part of the base excision repair (BER) pathway; protects from oxidative damage by removing the major product of DNA oxidation, 8-oxoguanine (GO), from single- and double-stranded DNA substrates. The chain is N-glycosylase/DNA lyase from Pyrobaculum aerophilum (strain ATCC 51768 / DSM 7523 / JCM 9630 / CIP 104966 / NBRC 100827 / IM2).